Reading from the N-terminus, the 155-residue chain is S-ribosylhomocysteine lyase (155 aa).

Fe cation-binding residues include H58, H62, and C125.

Belongs to the LuxS family. In terms of assembly, homodimer. It depends on Fe cation as a cofactor.

The enzyme catalyses S-(5-deoxy-D-ribos-5-yl)-L-homocysteine = (S)-4,5-dihydroxypentane-2,3-dione + L-homocysteine. Involved in the synthesis of autoinducer 2 (AI-2) which is secreted by bacteria and is used to communicate both the cell density and the metabolic potential of the environment. The regulation of gene expression in response to changes in cell density is called quorum sensing. Catalyzes the transformation of S-ribosylhomocysteine (RHC) to homocysteine (HC) and 4,5-dihydroxy-2,3-pentadione (DPD). This chain is S-ribosylhomocysteine lyase, found in Chromohalobacter salexigens (strain ATCC BAA-138 / DSM 3043 / CIP 106854 / NCIMB 13768 / 1H11).